A 510-amino-acid chain; its full sequence is Maturase K (510 aa).

Belongs to the intron maturase 2 family. MatK subfamily.

It localises to the plastid. The protein localises to the chloroplast. Usually encoded in the trnK tRNA gene intron. Probably assists in splicing its own and other chloroplast group II introns. The sequence is that of Maturase K from Populus trichocarpa (Western balsam poplar).